The sequence spans 503 residues: Glucosaminyl-phosphatidylinositol-acyltransferase PIGW (503 aa).

At 1 to 21 the chain is on the lumenal side; sequence MSQKQLKEAFVRNLSGTSVLE. A glycan (N-linked (GlcNAc...) asparagine) is linked at asparagine 13. A helical transmembrane segment spans residues 22 to 42; sequence VTQGLCFPAFCILCRGLWIIF. At 43–48 the chain is on the cytoplasmic side; the sequence is SQHVCS. Residues 49–71 traverse the membrane as a helical segment; sequence FSNTWSTRFLMDFVVLIVPLVIT. Over 72–74 the chain is Lumenal; the sequence is LTV. A helical transmembrane segment spans residues 75–97; that stretch reads LSSFILLENLTVIVWGAWLLYQI. Topologically, residues 98–131 are cytoplasmic; it reads YHRRTCYAKVPVQKVFANFLKISLESEYNPAITC. The helical transmembrane segment at 132 to 152 threads the bilayer; sequence YRVINSVFTAIAILAVDFPLF. The Lumenal portion of the chain corresponds to 153-160; it reads PRRFAKTE. Residues 161–181 form a helical membrane-spanning segment; that stretch reads LYGTGAMDFGVGGFIFGAAMV. The Cytoplasmic segment spans residues 182-201; it reads CPEVRRKSIEESRFNYLRKS. The chain crosses the membrane as a helical span at residues 202–222; that stretch reads LYSVWPLVFLGMGRLVIIKSI. Residues 223–236 lie on the Lumenal side of the membrane; the sequence is GYQEHSTEYGIHWN. A helical membrane pass occupies residues 237–257; it reads FFFTIIVVRLVTSLLLIIFPL. Topologically, residues 258 to 259 are cytoplasmic; that stretch reads NK. The helical transmembrane segment at 260–280 threads the bilayer; it reads SWIVAVSITVVYQLALDYTPL. Topologically, residues 281–304 are lumenal; that stretch reads KRILLYGTDGSGTRVGFLNANREG. A helical membrane pass occupies residues 305–325; the sequence is IISTLGYVTIHMAGVQTGLYV. Residues 326 to 339 lie on the Cytoplasmic side of the membrane; it reads LKGRAQVRDWIKAT. Residues 340 to 360 traverse the membrane as a helical segment; the sequence is CWVFSVAVGFFISLHIVQVNI. The Lumenal portion of the chain corresponds to 361 to 380; that stretch reads EAVSRRMANLAFCLWVVASS. Residues 381 to 401 traverse the membrane as a helical segment; that stretch reads LMLLSCLLLSGIILSFAQFLI. Topologically, residues 402–447 are cytoplasmic; that stretch reads KGSLVPCSWKLIQSPTTHKNHSESLILEAEKNQPSLCLITALNRNQ. Residue serine 415 is modified to Phosphoserine. Residues 448–468 traverse the membrane as a helical segment; sequence LFFFLLSNITTGLINLTMDTL. Residues 469 to 472 are Lumenal-facing; sequence HTGA. The chain crosses the membrane as a helical span at residues 473-493; sequence LWTLVVLSIYMFTNCLVIYVL. The Cytoplasmic portion of the chain corresponds to 494-503; it reads DLQGKTIKFW.

It belongs to the PIGW family.

The protein localises to the endoplasmic reticulum membrane. It functions in the pathway glycolipid biosynthesis; glycosylphosphatidylinositol-anchor biosynthesis. Acyltransferase that catalyzes the acyl transfer from an acyl-CoA at the 2-OH position of the inositol ring of glucosaminyl phosphatidylinositol (GlcN-PI) to generate GlcN-(acyl)PI and participates in the fourth step of GPI-anchor biosynthesi. Required for the transport of GPI-anchored proteins to the plasma membrane. Acetylation during GPI-anchor biosynthesis is not essential for the subsequent mannosylation and is usually removed soon after the attachment of GPIs to proteins. This chain is Glucosaminyl-phosphatidylinositol-acyltransferase PIGW, found in Mus musculus (Mouse).